The sequence spans 132 residues: ATP synthase epsilon chain (132 aa).

It belongs to the ATPase epsilon chain family. As to quaternary structure, F-type ATPases have 2 components, CF(1) - the catalytic core - and CF(0) - the membrane proton channel. CF(1) has five subunits: alpha(3), beta(3), gamma(1), delta(1), epsilon(1). CF(0) has three main subunits: a, b and c.

It is found in the cell membrane. In terms of biological role, produces ATP from ADP in the presence of a proton gradient across the membrane. The sequence is that of ATP synthase epsilon chain (atpC) from Geobacillus stearothermophilus (Bacillus stearothermophilus).